Here is a 398-residue protein sequence, read N- to C-terminus: F-box/kelch-repeat protein At1g30090 (398 aa).

Positions 51-98 (EPLIPGLPDDVALNCLLRVPVQSHVSSKSVCKRWHLLFGTKETFFAKR) constitute an F-box domain. 5 Kelch repeats span residues 106-152 (PWLF…FRSV), 159-207 (TMFV…VIDG), 209-255 (IYAA…VLNG), 257-304 (LLVT…IYDR), and 305-346 (LFIV…AVNC).

The polypeptide is F-box/kelch-repeat protein At1g30090 (Arabidopsis thaliana (Mouse-ear cress)).